An 89-amino-acid polypeptide reads, in one-letter code: Small ribosomal subunit protein uS15 (89 aa).

It belongs to the universal ribosomal protein uS15 family. Part of the 30S ribosomal subunit. Forms a bridge to the 50S subunit in the 70S ribosome, contacting the 23S rRNA.

Its function is as follows. One of the primary rRNA binding proteins, it binds directly to 16S rRNA where it helps nucleate assembly of the platform of the 30S subunit by binding and bridging several RNA helices of the 16S rRNA. Forms an intersubunit bridge (bridge B4) with the 23S rRNA of the 50S subunit in the ribosome. The chain is Small ribosomal subunit protein uS15 from Nitrosospira multiformis (strain ATCC 25196 / NCIMB 11849 / C 71).